The sequence spans 285 residues: Retron Ec67 DNA adenine methylase (285 aa).

Residues Trp-7, Lys-11, Asp-51, and Asp-179 each contribute to the S-adenosyl-L-methionine site.

This sequence belongs to the N(4)/N(6)-methyltransferase family.

The catalysed reaction is a 2'-deoxyadenosine in DNA + S-adenosyl-L-methionine = an N(6)-methyl-2'-deoxyadenosine in DNA + S-adenosyl-L-homocysteine + H(+). Its function is as follows. An alpha subtype methylase that recognizes the double-stranded sequence 5'-GATC-3' and methylates A-2 on both strands. May play a regulatory role in the functions of the retron. The sequence is that of Retron Ec67 DNA adenine methylase from Escherichia coli.